A 126-amino-acid chain; its full sequence is Penton protein P31 (126 aa).

It is found in the virion. Its function is as follows. In association with P2 and trimeric P5, forms the spike complexes located at the 5-fold vertices of the capsid. Essential for viral infectivity. The sequence is that of Penton protein P31 (XXXI) from Acinetobacter calcoaceticus (Arthrobacter siderocapsulatus).